The sequence spans 709 residues: Protein transport protein SEC39 (709 aa).

This sequence belongs to the SEC39 family. In terms of assembly, component of a peripheral membrane protein complex consisting of DSL1, SEC39/DSL3 and TIP20. Bound to a SNARE complex consisting of UFE1, USE1, SEC20 and SEC22 or YKT6 through direct interaction of TIP20 with SEC20. Interacts with TIP20 and DSL1.

The protein localises to the endoplasmic reticulum membrane. Functionally, required for protein transport between the Golgi and the endoplasmic reticulum. May contribute to tethering of coatomer-coated retrograde transport vesicles to the ER membrane through interaction with and stabilization of the SNARE complex. This is Protein transport protein SEC39 from Saccharomyces cerevisiae (strain ATCC 204508 / S288c) (Baker's yeast).